The primary structure comprises 784 residues: Toll-like receptor 2 (784 aa).

Residues 1-20 (MPHALWTVWVLGAVISLSKE) form the signal peptide. Over 21 to 587 (GVPDQPSSLS…THLSVSECHR (567 aa)) the chain is Extracellular. Cys31 and Cys37 form a disulfide bridge. 19 LRR repeats span residues 54-77 (AVKS…WKCV), 78-101 (NLKA…SSLR), 102-125 (SLEH…RPLS), 126-150 (SLKF…SHLT), 151-175 (NLRI…GLTF), 176-199 (LEEL…SIQN), 200-223 (ISHL…TLSS), 224-250 (LEYL…TNTL), 251-278 (IKKF…YISG), 279-308 (VSEA…VIGK), 309-337 (LETL…LTER), 338-361 (VKRI…HLKS), 362-388 (LEYL…AWPS), 389-414 (LQTL…TLKN), 415-437 (LTKL…WPEK), 438-457 (MKYL…CIPQ), 458-478 (TLEV…ILPQ), 479-500 (VKEL…FLPM), and 501-524 (LLVM…SFQK). The N-linked (GlcNAc...) asparagine glycan is linked to Asn115. N-linked (GlcNAc...) asparagine glycosylation is present at Asn199. Cys353 and Cys382 are oxidised to a cystine. The N-linked (GlcNAc...) asparagine glycan is linked to Asn414. A disulfide bridge connects residues Cys432 and Cys454. A glycan (N-linked (GlcNAc...) asparagine) is linked at Asn442. The region spanning 525–579 (LKTLEAGGNNFICSCEFLSFTQEEQALDQILIDWPENYLCDSPSHVRGQRVQDTH) is the LRRCT domain. The chain crosses the membrane as a helical span at residues 588 to 608 (TALVSAVCCALFLSILLTGVL). The Cytoplasmic segment spans residues 609-784 (CHHFHGLWYM…WLNLRAAIKS (176 aa)). The 144-residue stretch at 639–782 (ICYDAFVSYS…GFWLNLRAAI (144 aa)) folds into the TIR domain. A Glycyl lysine isopeptide (Lys-Gly) (interchain with G-Cter in ubiquitin) cross-link involves residue Lys754. An ATG16L1-binding motif motif is present at residues 761–778 (YLEWPTDEAQQEGFWLNL).

It belongs to the Toll-like receptor family. As to quaternary structure, interacts with LY96, TLR1 and TLR6 (via extracellular domain). TLR2 seems to exist in heterodimers with either TLR1 or TLR6 before stimulation by the ligand. The heterodimers form bigger oligomers in response to their corresponding ligands as well as further heterotypic associations with other receptors such as CD14 and/or CD36. Binds MYD88 (via TIR domain). Interacts with TICAM1. Interacts with CNPY3. Interacts with ATG16L1. Interacts with PPP1R11. Interacts with TICAM2. Interacts with TIRAP. In terms of processing, ubiquitinated at Lys-754 by PPP1R11, leading to its degradation. Deubiquitinated by USP2. Glycosylation of Asn-442 is critical for secretion of the N-terminal ectodomain of TLR2.

The protein localises to the membrane. Its subcellular location is the cytoplasmic vesicle. It localises to the phagosome membrane. The protein resides in the membrane raft. Functionally, cooperates with LY96 to mediate the innate immune response to bacterial lipoproteins and other microbial cell wall components. Cooperates with TLR1 or TLR6 to mediate the innate immune response to bacterial lipoproteins or lipopeptides. Acts via MYD88 and TRAF6, leading to NF-kappa-B activation, cytokine secretion and the inflammatory response. May also promote apoptosis in response to lipoproteins. Forms activation clusters composed of several receptors depending on the ligand, these clusters trigger signaling from the cell surface and subsequently are targeted to the Golgi in a lipid-raft dependent pathway. Forms the cluster TLR2:TLR6:CD14:CD36 in response to diacylated lipopeptides and TLR2:TLR1:CD14 in response to triacylated lipopeptides. This Equus caballus (Horse) protein is Toll-like receptor 2 (TLR2).